A 784-amino-acid polypeptide reads, in one-letter code: Kinesin-like protein Klp68D (784 aa).

The Kinesin motor domain maps to 19–344 (CVQVVVRCRP…LRYASRAKSI (326 aa)). 106–113 (GQTGTGKT) is an ATP binding site. Residues 351–385 (NEDPQDAKLKEYQEEIERLKRLIGPQQQQRSEKQV) adopt a coiled-coil conformation. 3 disordered regions span residues 371–449 (RLIG…ERER), 605–652 (KFSS…PSSL), and 742–784 (IKSS…LVNK). Residues 386–396 (TAKKQRVKKPK) show a composition bias toward basic residues. Residues 416-428 (PVEDDSDPEGAES) are compositionally biased toward acidic residues. Residues 426–582 (AESESDKENE…KRQLLIIDNF (157 aa)) are a coiled coil. The segment covering 429-449 (ESDKENEAEVAKSNEELERER) has biased composition (basic and acidic residues). Residues 622-634 (SSKRPVSHPQRRR) show a composition bias toward basic residues. Over residues 769–778 (KKPASAYPKA) the composition is skewed to low complexity.

The protein belongs to the TRAFAC class myosin-kinesin ATPase superfamily. Kinesin family. Kinesin II subfamily. In terms of tissue distribution, expressed primarily in the central nervous system and in a subset of the peripheral nervous system during embryogenesis.

The protein localises to the cytoplasm. The protein resides in the cytoskeleton. Plus-end directed microtubule motor that may be used for anterograde axonal transport and could conceivably move cargos in fly neurons different than those moved by kinesin heavy chain or other plus-end directed motors. This Drosophila melanogaster (Fruit fly) protein is Kinesin-like protein Klp68D (Klp68D).